The chain runs to 458 residues: uncharacterized protein (458 aa).

Residues 1-10 show a composition bias toward basic and acidic residues; that stretch reads MQAEPKKSQA. Residues 1–20 are disordered; it reads MQAEPKKSQAEQRAVAEPVS. One can recognise a TRAM domain in the interval 23–84; it reads VSLVGEEYEV…ARFLRADAVE (62 aa). Residues C97, C105, C108, and C193 each coordinate [4Fe-4S] cluster. Positions 287, 316, 340, and 384 each coordinate S-adenosyl-L-methionine. C411 functions as the Nucleophile in the catalytic mechanism.

Belongs to the class I-like SAM-binding methyltransferase superfamily. RNA M5U methyltransferase family.

This is an uncharacterized protein from Streptomyces coelicolor (strain ATCC BAA-471 / A3(2) / M145).